Consider the following 248-residue polypeptide: MTKLIVIKIGGQAISQLSTTFFDQIAQWYQQHYQILIVHGGGPMINRLTTQLALPVHKVNGLRVTDAATLVLTKLALLGDAQPALLAKLTQHHLPVLGLNAADNQLLTGELIDYRQLGYVGRLTAVNQVQLMQLLAHHIGILAPLALTETGQWLNVNADMAATVLAQQLHAEKLVLLTDVPGIIHHGNVMTSLSPQQAQQLIRTAVITAGMQPKVQAAIAAIQTGVKQAIITNAIDQPGTAIIQEVAV.

Residues 41-42, Arg63, and Asn155 contribute to the substrate site; that span reads GG.

It belongs to the acetylglutamate kinase family. ArgB subfamily.

The protein localises to the cytoplasm. The catalysed reaction is N-acetyl-L-glutamate + ATP = N-acetyl-L-glutamyl 5-phosphate + ADP. It functions in the pathway amino-acid biosynthesis; L-arginine biosynthesis; N(2)-acetyl-L-ornithine from L-glutamate: step 2/4. In terms of biological role, catalyzes the ATP-dependent phosphorylation of N-acetyl-L-glutamate. This Lactiplantibacillus plantarum (strain ATCC BAA-793 / NCIMB 8826 / WCFS1) (Lactobacillus plantarum) protein is Acetylglutamate kinase.